We begin with the raw amino-acid sequence, 257 residues long: Global transcriptional regulator CodY (257 aa).

Residues 1 to 155 are GAF domain; the sequence is MSLLSKTREL…AATVIGMEIL (155 aa). GTP is bound by residues V22, F24, S43, R44, R45, and K47. The L-isoleucine site is built by R61, T96, and F98. Residues E153 and K158 each contribute to the GTP site. A DNA-binding region (H-T-H motif) is located at residues 203–222; that stretch reads ASKVADRVGITRSVIVNALR.

This sequence belongs to the CodY family. In terms of assembly, homodimer. Homotetramer. May form homodimers under conditions in which energy sources are sufficient (active state) and homotetramers under insufficient nutrient conditions (inactive state).

It is found in the cytoplasm. With respect to regulation, activity of CodY is modulated by interaction with two types of effectors: the branched-chain amino acids (BCAAs) leucine, isoleucine and valine, which are signals of the nutritional status of the cell, and GTP, which may signal the energetic status of the cell. In terms of biological role, DNA-binding global transcriptional regulator which is involved in the adaptive response to starvation and acts by directly or indirectly controlling the expression of numerous genes in response to nutrient availability. During rapid exponential growth, CodY is highly active and represses genes whose products allow adaptation to nutrient depletion. This Staphylococcus aureus (strain Mu3 / ATCC 700698) protein is Global transcriptional regulator CodY.